Consider the following 211-residue polypeptide: Putative hydrolase SMU_367 (211 aa).

The first 29 residues, 1–29, serve as a signal peptide directing secretion; that stretch reads MKKQFLEKAVFTVAATAATVVLGNKMADA. Residues 30–74 enclose the LysM domain; that stretch reads DTYTLQEGDSFFSVAQRYHMDAYELASMNGKDITSLILPGQTLTV. The tract at residues 77 to 101 is disordered; sequence SAAPDNQAAAPTDTTQATTETNDAN. The segment covering 78 to 101 has biased composition (low complexity); the sequence is AAPDNQAAAPTDTTQATTETNDAN. One can recognise a Peptidase C51 domain in the interval 85–209; the sequence is AAPTDTTQAT…GTPGSVSYIY (125 aa).

This is Putative hydrolase SMU_367 from Streptococcus mutans serotype c (strain ATCC 700610 / UA159).